Reading from the N-terminus, the 225-residue chain is ATP-dependent dethiobiotin synthetase BioD 1 (225 aa).

Mg(2+) contacts are provided by E13 and T17. An ATP-binding site is contributed by 13 to 18; sequence EVGKTV. Residue K38 is part of the active site. A substrate-binding site is contributed by S42. Positions 55 and 116 each coordinate Mg(2+). ATP-binding positions include D55, 116-119, and 176-177; these read EGAG and ND. Residue Y188 coordinates substrate. Residues 205–207 and E212 each bind ATP; that span reads PWL.

Belongs to the dethiobiotin synthetase family. Homodimer. It depends on Mg(2+) as a cofactor.

It is found in the cytoplasm. It carries out the reaction (7R,8S)-7,8-diammoniononanoate + CO2 + ATP = (4R,5S)-dethiobiotin + ADP + phosphate + 3 H(+). It functions in the pathway cofactor biosynthesis; biotin biosynthesis; biotin from 7,8-diaminononanoate: step 1/2. Catalyzes a mechanistically unusual reaction, the ATP-dependent insertion of CO2 between the N7 and N8 nitrogen atoms of 7,8-diaminopelargonic acid (DAPA, also called 7,8-diammoniononanoate) to form a ureido ring. Only CTP can partially replace ATP while diaminobiotin is only 37% as effective as 7,8-diaminopelargonic acid. In another study both CTP and GTP (but not ITP, TTP or UTP) can partially replace ATP. The polypeptide is ATP-dependent dethiobiotin synthetase BioD 1 (Escherichia coli (strain K12)).